Consider the following 150-residue polypeptide: Large ribosomal subunit protein bL9 (150 aa).

This sequence belongs to the bacterial ribosomal protein bL9 family.

Functionally, binds to the 23S rRNA. This is Large ribosomal subunit protein bL9 from Moorella thermoacetica (strain ATCC 39073 / JCM 9320).